The chain runs to 193 residues: NADH-quinone oxidoreductase subunit B (193 aa).

Positions 72, 73, 137, and 167 each coordinate [4Fe-4S] cluster.

This sequence belongs to the complex I 20 kDa subunit family. In terms of assembly, NDH-1 is composed of 14 different subunits. Subunits NuoB, C, D, E, F, and G constitute the peripheral sector of the complex. [4Fe-4S] cluster serves as cofactor.

The protein resides in the cell inner membrane. It carries out the reaction a quinone + NADH + 5 H(+)(in) = a quinol + NAD(+) + 4 H(+)(out). Functionally, NDH-1 shuttles electrons from NADH, via FMN and iron-sulfur (Fe-S) centers, to quinones in the respiratory chain. The immediate electron acceptor for the enzyme in this species is believed to be ubiquinone. Couples the redox reaction to proton translocation (for every two electrons transferred, four hydrogen ions are translocated across the cytoplasmic membrane), and thus conserves the redox energy in a proton gradient. This Rhizobium rhizogenes (strain K84 / ATCC BAA-868) (Agrobacterium radiobacter) protein is NADH-quinone oxidoreductase subunit B.